Here is a 563-residue protein sequence, read N- to C-terminus: Probable trehalase (563 aa).

Residues R154, 161–162 (WD), N198, 207–209 (RSQ), 274–276 (RPE), and G307 contribute to the substrate site. Active-site proton donor/acceptor residues include D309 and E517. E532 lines the substrate pocket.

Belongs to the glycosyl hydrolase 37 family.

It carries out the reaction alpha,alpha-trehalose + H2O = alpha-D-glucose + beta-D-glucose. In terms of biological role, involved in the regulation of trehalose content by hydrolyzing trehalose to glucose. This chain is Probable trehalase, found in Oryza sativa subsp. japonica (Rice).